We begin with the raw amino-acid sequence, 20 residues long: Sperm acrosome membrane-associated protein 3, processed form (20 aa).

Belongs to the glycosyl hydrolase 22 family.

In terms of biological role, sperm surface membrane protein that may be involved in sperm-egg plasma membrane adhesion and fusion during fertilization. It could be a potential receptor for the egg oligosaccharide residue N-acetylglucosamine, which is present in the extracellular matrix over the egg plasma membrane. The sequence is that of Sperm acrosome membrane-associated protein 3, processed form (SPACA3) from Vulpes vulpes (Red fox).